A 392-amino-acid chain; its full sequence is 2'-deamino-2'-hydroxyneamine transaminase (392 aa).

Lysine 249 is subject to N6-(pyridoxal phosphate)lysine.

Belongs to the class-III pyridoxal-phosphate-dependent aminotransferase family. Pyridoxal 5'-phosphate is required as a cofactor.

The enzyme catalyses neamine + 2-oxoglutarate = 6'-oxoparomamine + L-glutamate. It catalyses the reaction 2'-deamino-2'-hydroxyneamine + 2-oxoglutarate = 2'-deamino-2'-hydroxy-6'-dehydroparomamine + L-glutamate. It participates in antibiotic biosynthesis; kanamycin biosynthesis. In terms of biological role, aminotransferase that has 6'-oxoglucosaminyl:L-glutamate aminotransferase activity by catalyzing pyridoxal-5'-phosphate-mediated transamination leading to the conversion of paromamine to neamine in the biosynthetic pathway of kanamycin B. The chain is 2'-deamino-2'-hydroxyneamine transaminase (kacL) from Streptomyces kanamyceticus.